The sequence spans 138 residues: Histone H2B (138 aa).

The span at 1-10 (MPPKAAEKKP) shows a compositional bias: basic and acidic residues. The tract at residues 1 to 47 (MPPKAAEKKPSTAGKAPAGKAPEKKEAGKKTTAAGGEKKKRSKTRKE) is disordered. Residues Lys8 and Lys9 each carry the N6-acetyllysine; alternate modification. Glycyl lysine isopeptide (Lys-Gly) (interchain with G-Cter in SUMO); alternate cross-links involve residues Lys8 and Lys9. Over residues 11–20 (STAGKAPAGK) the composition is skewed to low complexity. The residue at position 15 (Lys15) is an N6-acetyllysine. An N6-acetyllysine; alternate modification is found at Lys24. Residue Lys24 forms a Glycyl lysine isopeptide (Lys-Gly) (interchain with G-Cter in SUMO); alternate linkage. Lys25 participates in a covalent cross-link: Glycyl lysine isopeptide (Lys-Gly) (interchain with G-Cter in SUMO). A Glycyl lysine isopeptide (Lys-Gly) (interchain with G-Cter in ubiquitin) cross-link involves residue Lys132.

This sequence belongs to the histone H2B family. The nucleosome is a histone octamer containing two molecules each of H2A, H2B, H3 and H4 assembled in one H3-H4 heterotetramer and two H2A-H2B heterodimers. The octamer wraps approximately 147 bp of DNA. Post-translationally, monoubiquitinated to form H2BK123ub1. H2BK123ub1 gives a specific tag for epigenetic transcriptional activation and is also prerequisite for H3K4me and H3K79me formation. H2BK123ub1 also modulates the formation of double-strand breaks during meiosis and is a prerequisite for DNA-damage checkpoint activation. In terms of processing, acetylated by GCN5 to form H2BK11ac and H2BK16ac. H2BK16ac can also be formed by ESA1. Acetylation of N-terminal lysines and particularly formation of H2BK11acK16ac has a positive effect on transcription. Sumoylation to form H2BK6su or H2BK7su, and probably also H2BK16su or H2BK17su, occurs preferentially near the telomeres and represses gene transcription.

Its subcellular location is the nucleus. The protein resides in the chromosome. Its function is as follows. Core component of nucleosome. Nucleosomes wrap and compact DNA into chromatin, limiting DNA accessibility to the cellular machineries which require DNA as a template. Histones thereby play a central role in transcription regulation, DNA repair, DNA replication and chromosomal stability. DNA accessibility is regulated via a complex set of post-translational modifications of histones, also called histone code, and nucleosome remodeling. The polypeptide is Histone H2B (HTB1) (Ajellomyces capsulatus (Darling's disease fungus)).